A 568-amino-acid polypeptide reads, in one-letter code: Urease subunit alpha (568 aa).

One can recognise a Urease domain in the interval 130–568; it reads GGIDTHIHFI…LPMAQRYFLF (439 aa). The Ni(2+) site is built by His135, His137, and Lys218. An N6-carboxylysine modification is found at Lys218. His220 serves as a coordination point for substrate. The Ni(2+) site is built by His247 and His273. His321 functions as the Proton donor in the catalytic mechanism. A Ni(2+)-binding site is contributed by Asp361.

Belongs to the metallo-dependent hydrolases superfamily. Urease alpha subunit family. In terms of assembly, heterotrimer of UreA (gamma), UreB (beta) and UreC (alpha) subunits. Three heterotrimers associate to form the active enzyme. The cofactor is Ni cation. Carboxylation allows a single lysine to coordinate two nickel ions.

It localises to the cytoplasm. The enzyme catalyses urea + 2 H2O + H(+) = hydrogencarbonate + 2 NH4(+). It participates in nitrogen metabolism; urea degradation; CO(2) and NH(3) from urea (urease route): step 1/1. This Burkholderia multivorans (strain ATCC 17616 / 249) protein is Urease subunit alpha.